A 439-amino-acid chain; its full sequence is Diaminopimelate decarboxylase (439 aa).

Position 66 is an N6-(pyridoxal phosphate)lysine (lysine 66). Residues glycine 248 and 290-293 (EPGR) contribute to the pyridoxal 5'-phosphate site. The substrate site is built by arginine 293, arginine 330, and tyrosine 334. Cysteine 361 functions as the Proton donor in the catalytic mechanism. The substrate site is built by glutamate 362 and tyrosine 390. Position 390 (tyrosine 390) interacts with pyridoxal 5'-phosphate.

This sequence belongs to the Orn/Lys/Arg decarboxylase class-II family. LysA subfamily. Homodimer. Pyridoxal 5'-phosphate is required as a cofactor.

The enzyme catalyses meso-2,6-diaminopimelate + H(+) = L-lysine + CO2. Its pathway is amino-acid biosynthesis; L-lysine biosynthesis via DAP pathway; L-lysine from DL-2,6-diaminopimelate: step 1/1. In terms of biological role, specifically catalyzes the decarboxylation of meso-diaminopimelate (meso-DAP) to L-lysine. The protein is Diaminopimelate decarboxylase of Bacillus subtilis (strain 168).